We begin with the raw amino-acid sequence, 86 residues long: Putative sodium channel toxin Ts17 (86 aa).

An N-terminal signal peptide occupies residues Met1–Gly19. Residues Lys21–Lys82 form the LCN-type CS-alpha/beta domain. Cystine bridges form between Cys31/Cys81, Cys35/Cys57, Cys43/Cys64, and Cys47/Cys66. A Proline amide modification is found at Pro83.

It belongs to the long (4 C-C) scorpion toxin superfamily. Sodium channel inhibitor family. Alpha subfamily. As to expression, expressed by the venom gland.

The protein resides in the secreted. Its function is as follows. Alpha toxins bind voltage-independently at site-3 of sodium channels (Nav) and inhibit the inactivation of the activated channels, thereby blocking neuronal transmission. This is Putative sodium channel toxin Ts17 from Tityus serrulatus (Brazilian scorpion).